Consider the following 334-residue polypeptide: L-lactate dehydrogenase C chain (334 aa).

Residues 30-58 (GQVG…LEDK), R100, and N139 each bind NAD(+). Residues N139 and R170 each contribute to the substrate site. The active-site Proton acceptor is H194. T249 contributes to the substrate binding site.

Belongs to the LDH/MDH superfamily. LDH family. Homotetramer.

It localises to the cytoplasm. The catalysed reaction is (S)-lactate + NAD(+) = pyruvate + NADH + H(+). Its pathway is fermentation; pyruvate fermentation to lactate; (S)-lactate from pyruvate: step 1/1. The chain is L-lactate dehydrogenase C chain (ldhc) from Xenopus laevis (African clawed frog).